The chain runs to 1187 residues: Roquin-2 (1187 aa).

Residues cysteine 14, cysteine 17, cysteine 33, histidine 35, cysteine 38, cysteine 50, and aspartate 53 each coordinate Zn(2+). Residues 14 to 54 (CPICYNEFDENVHKPISLGCSHTVCKTCLNKLHRKACPFDQ) form an RING-type; degenerate zinc finger. Residues 91 to 170 (ENKHYEVAKK…RTVTELILQH (80 aa)) form an HEPN-N region. An ROQ region spans residues 171–325 (QNPQQLSANL…SIIDKLQSPE (155 aa)). Residues 326–396 (SFAKSVQELT…GLVDFIQNYS (71 aa)) form an HEPN-C region. The C3H1-type zinc finger occupies 410–438 (KYKTSMCRDLRQQGGCPRGTNCTFAHSQE). Disordered stretches follow at residues 527 to 571 (VGTN…GTEL) and 640 to 677 (NVPESSLPPASMPYADHYSTFSPRDRMNSSPYQPPPPQ). Residues 529 to 545 (TNAQNAGPSAESVSENK) are compositionally biased toward polar residues. Phosphoserine is present on serine 548. Over residues 553-571 (PVSNAAATSAGPSNFGTEL) the composition is skewed to polar residues. A phosphoserine mark is found at serine 806, serine 981, and serine 1115.

As to quaternary structure, interacts with EDC4. Interacts with CCR4-NOT deadenylase complex. Interacts with MAP3K5; the interaction is probably stimulus-dependent. Proteolytically cleaved by MALT1 in activated CD4(+) T cells; cleavage at Arg-509 is critical for promoting RC3H1 degradation in response to T-cell receptor (TCR) stimulation, and hence is necessary for prolonging the stability of a set of mRNAs controlling Th17 cell differentiation. As to expression, highest levels in lymph node and thymus and slightly lesser amounts in brain, lung, and spleen (at protein level). Very weak expression in heart, muscle, and kidney (at protein level). Expressed in CD4(+) helper T-cells (at protein level).

The protein localises to the cytoplasm. It is found in the P-body. It carries out the reaction S-ubiquitinyl-[E2 ubiquitin-conjugating enzyme]-L-cysteine + [acceptor protein]-L-lysine = [E2 ubiquitin-conjugating enzyme]-L-cysteine + N(6)-ubiquitinyl-[acceptor protein]-L-lysine.. It functions in the pathway protein modification; protein ubiquitination. Its activity is regulated as follows. Binding to dsRNA, but not CDE RNA, crosstalks with the E3 ubiquitin ligase activity and may inhibit ubiquitination. Its function is as follows. Post-transcriptional repressor of mRNAs containing a conserved stem loop motif, called constitutive decay element (CDE), which is often located in the 3'-UTR, as in HMGXB3, ICOS, IER3, NFKBID, NFKBIZ, PPP1R10, TNF and in many more mRNAs. Binds to CDE and promotes mRNA deadenylation and degradation. This process does not involve miRNAs. In follicular helper T (Tfh) cells, represses of ICOS and TNFRSF4 expression, thus preventing spontaneous Tfh cell differentiation, germinal center B-cell differentiation in the absence of immunization and autoimmunity. In resting or LPS-stimulated macrophages, controls inflammation by suppressing TNF expression. Also recognizes CDE in its own mRNA and in that of paralogous RC3H1, possibly leading to feedback loop regulation. Inhibits cooperatively with ZC3H12A the differentiation of helper T cells Th17 in lungs. They repress target mRNA encoding the Th17 cell-promoting factors IL6, ICOS, REL, IRF4, NFKBID and NFKBIZ. The cooperation requires RNA-binding by RC3H1 and the nuclease activity of ZC3H12A. miRNA-binding protein that regulates microRNA homeostasis. Enhances DICER-mediated processing of pre-MIR146a but reduces mature MIR146a levels through an increase of 3' end uridylation. Both inhibits ICOS mRNA expression and they may act together to exert the suppression. Acts as a ubiquitin E3 ligase. Pairs with E2 enzymes UBE2B, UBE2D2, UBE2E2, UBE2E3, UBE2G2, UBE2K and UBE2Q2 and produces polyubiquitin chains. Shows the strongest activity when paired with UBE2N:UBE2V1 or UBE2N:UBE2V2 E2 complexes and generate both short and long polyubiquitin chains. Involved in the ubiquitination of MAP3K5. Able to interact with double-stranded RNA (dsRNA). This chain is Roquin-2 (Rc3h2), found in Mus musculus (Mouse).